The sequence spans 410 residues: Histidine--tRNA ligase (410 aa).

This sequence belongs to the class-II aminoacyl-tRNA synthetase family.

The protein localises to the cytoplasm. The enzyme catalyses tRNA(His) + L-histidine + ATP = L-histidyl-tRNA(His) + AMP + diphosphate + H(+). The sequence is that of Histidine--tRNA ligase from Methanocorpusculum labreanum (strain ATCC 43576 / DSM 4855 / Z).